The sequence spans 259 residues: Hydroxyacylglutathione hydrolase (259 aa).

Residues His-56, His-58, Asp-60, His-61, His-112, Asp-133, and His-171 each contribute to the Zn(2+) site.

Belongs to the metallo-beta-lactamase superfamily. Glyoxalase II family. In terms of assembly, monomer. Requires Zn(2+) as cofactor.

It carries out the reaction an S-(2-hydroxyacyl)glutathione + H2O = a 2-hydroxy carboxylate + glutathione + H(+). It participates in secondary metabolite metabolism; methylglyoxal degradation; (R)-lactate from methylglyoxal: step 2/2. Functionally, thiolesterase that catalyzes the hydrolysis of S-D-lactoyl-glutathione to form glutathione and D-lactic acid. This Pseudomonas putida (strain GB-1) protein is Hydroxyacylglutathione hydrolase.